A 235-amino-acid polypeptide reads, in one-letter code: Endonuclease V (235 aa).

Aspartate 47 and aspartate 117 together coordinate Mg(2+).

Belongs to the endonuclease V family. Mg(2+) serves as cofactor.

The protein localises to the cytoplasm. It catalyses the reaction Endonucleolytic cleavage at apurinic or apyrimidinic sites to products with a 5'-phosphate.. Its function is as follows. DNA repair enzyme involved in the repair of deaminated bases. Selectively cleaves double-stranded DNA at the second phosphodiester bond 3' to a deoxyinosine leaving behind the intact lesion on the nicked DNA. This Protochlamydia amoebophila (strain UWE25) protein is Endonuclease V.